The following is a 397-amino-acid chain: Mycinamicin IV hydroxylase/epoxidase (397 aa).

The disordered stretch occupies residues Arg-63 to Met-86. Residues Thr-68–Met-78 are compositionally biased toward basic and acidic residues. Position 81 (Gly-81) interacts with substrate. Heme is bound by residues His-91, Arg-95, Arg-288, His-344, and Cys-346.

Belongs to the cytochrome P450 family. Heme is required as a cofactor.

It participates in antibiotic biosynthesis; mycinamicin biosynthesis. Involved in the biosynthesis of mycinamicin, a 16-membered macrolide antibiotic. Catalyzes consecutive hydroxylation (at C14) and epoxidation (at C12-C13) reactions with mycinamicin IV as initial substrate, leading to mycinamicin II. These reactions require prior dimethylation of 6-deoxyallose to mycinose for effective conversion by the dual function MycG enzyme. The chain is Mycinamicin IV hydroxylase/epoxidase from Micromonospora griseorubida.